A 500-amino-acid chain; its full sequence is Hexose transporter 1 (500 aa).

Over 1-25 (MKNSNEISSSQSLKNNGSDGFFNTS) the chain is Cytoplasmic. Residues 26–46 (LMYVLAACLASFLFGYQVSVL) traverse the membrane as a helical segment. Topologically, residues 47-75 (NTIKDFIVIEFGWCAGKEVNCDDSTLKSS) are extracellular. The cysteines at positions 60 and 67 are disulfide-linked. The chain crosses the membrane as a helical span at residues 76–96 (FLLASVFIGAVVGSGFSGFLV). Topologically, residues 97 to 101 (QHGRR) are cytoplasmic. A helical membrane pass occupies residues 102 to 122 (FSLLVIYNFFILVSILTSITH). The Extracellular segment spans residues 123 to 131 (HFHTILFSR). A helical transmembrane segment spans residues 132–152 (LLSGFGIGLITVSVPMYISEM). Topologically, residues 153-166 (THKDKKGAYGVLHQ) are cytoplasmic. Residue Gln-166 participates in alpha-D-glucose binding. Gln-166 lines the beta-D-glucose pocket. A helical transmembrane segment spans residues 167 to 187 (LFITFGIFIAVLLGMAMGNVP). Residues 188–203 (EEVNNPLGTFQQIWWR) are Extracellular-facing. The helical transmembrane segment at 204 to 224 (LMFFFPCIISILGIVLLTFFF) threads the bilayer. Over 225-289 (KEETPYYLFE…RAMKIPSYRY (65 aa)) the chain is Cytoplasmic. A helical transmembrane segment spans residues 290–310 (VILLGCILSGLQQFTGINVLV). The alpha-D-glucose site is built by Gln-301, Gln-302, and Asn-307. Gln-301 serves as a coordination point for beta-D-glucose. Asn-307 provides a ligand contact to beta-D-glucose. The Extracellular segment spans residues 311 to 327 (SNSNALYKGFLTNEWIT). A helical transmembrane segment spans residues 328 to 348 (TLSVIMTVVNFLMTFPAIYIV). Beta-D-glucose is bound at residue Asn-337. Over 349 to 356 (EKLGRKTL) the chain is Cytoplasmic. Residues 357 to 377 (LLCGCAGIVCAFLPTAIANLI) traverse the membrane as a helical segment. Over 378 to 390 (NNTSDVVKKLSIS) the chain is Extracellular. A helical transmembrane segment spans residues 391 to 411 (ATFVMIVSFAVSYGPVLWIYL). Trp-408 contacts alpha-D-glucose. Residues 412-425 (HEMFPSEIKDSAAS) are Cytoplasmic-facing. The helical transmembrane segment at 426–446 (LASLVNWMCAIIVVFPSDIII) threads the bilayer. The Extracellular segment spans residues 447-451 (KQSPT). Residues 452–472 (ILFFIFSGMSIVAFLFIFFFI) traverse the membrane as a helical segment. The Cytoplasmic portion of the chain corresponds to 473–500 (KETKGGEIGTSPYITLEERQKHMGKSVV).

This sequence belongs to the major facilitator superfamily. Sugar transporter (TC 2.A.1.1) family. As to quaternary structure, homodimer.

Its subcellular location is the cell membrane. It carries out the reaction D-glucose(out) = D-glucose(in). The enzyme catalyses D-fructose(out) = D-fructose(in). The catalysed reaction is D-galactose(in) = D-galactose(out). It catalyses the reaction D-mannose(out) = D-mannose(in). It carries out the reaction D-glucosamine(out) = D-glucosamine(in). The enzyme catalyses D-xylose(out) = D-xylose(in). Inhibited by cytochalasin B. Its function is as follows. Sodium-independent facilitative hexose transporter. Can transport D-glucose and D-fructose. Can transport D-mannose, D-galactose, D-xylose and D-glucosamine. The protein is Hexose transporter 1 of Plasmodium knowlesi.